A 334-amino-acid chain; its full sequence is Biotin synthase (334 aa).

Positions 55–280 constitute a Radical SAM core domain; it reads EEIEVEGIIS…HTMLRFAGGR (226 aa). [4Fe-4S] cluster is bound by residues Cys70, Cys74, and Cys77. [2Fe-2S] cluster-binding residues include Cys113, Cys205, and Arg275.

It belongs to the radical SAM superfamily. Biotin synthase family. In terms of assembly, homodimer. Requires [4Fe-4S] cluster as cofactor. It depends on [2Fe-2S] cluster as a cofactor.

The catalysed reaction is (4R,5S)-dethiobiotin + (sulfur carrier)-SH + 2 reduced [2Fe-2S]-[ferredoxin] + 2 S-adenosyl-L-methionine = (sulfur carrier)-H + biotin + 2 5'-deoxyadenosine + 2 L-methionine + 2 oxidized [2Fe-2S]-[ferredoxin]. The protein operates within cofactor biosynthesis; biotin biosynthesis; biotin from 7,8-diaminononanoate: step 2/2. Catalyzes the conversion of dethiobiotin (DTB) to biotin by the insertion of a sulfur atom into dethiobiotin via a radical-based mechanism. The chain is Biotin synthase from Corynebacterium glutamicum (strain ATCC 13032 / DSM 20300 / JCM 1318 / BCRC 11384 / CCUG 27702 / LMG 3730 / NBRC 12168 / NCIMB 10025 / NRRL B-2784 / 534).